We begin with the raw amino-acid sequence, 251 residues long: Flagellar L-ring protein (251 aa).

A signal peptide spans 1-17; the sequence is MIRKLAALIVAAAALQA. A lipid anchor (N-palmitoyl cysteine) is attached at C18. C18 is lipidated: S-diacylglycerol cysteine.

This sequence belongs to the FlgH family. As to quaternary structure, the basal body constitutes a major portion of the flagellar organelle and consists of four rings (L,P,S, and M) mounted on a central rod.

Its subcellular location is the cell outer membrane. The protein resides in the bacterial flagellum basal body. Functionally, assembles around the rod to form the L-ring and probably protects the motor/basal body from shearing forces during rotation. The chain is Flagellar L-ring protein from Maricaulis maris (strain MCS10) (Caulobacter maris).